Consider the following 352-residue polypeptide: UDP-3-O-acylglucosamine N-acyltransferase (352 aa).

His244 functions as the Proton acceptor in the catalytic mechanism.

The protein belongs to the transferase hexapeptide repeat family. LpxD subfamily. Homotrimer.

The enzyme catalyses a UDP-3-O-[(3R)-3-hydroxyacyl]-alpha-D-glucosamine + a (3R)-hydroxyacyl-[ACP] = a UDP-2-N,3-O-bis[(3R)-3-hydroxyacyl]-alpha-D-glucosamine + holo-[ACP] + H(+). Its pathway is bacterial outer membrane biogenesis; LPS lipid A biosynthesis. Its function is as follows. Catalyzes the N-acylation of UDP-3-O-acylglucosamine using 3-hydroxyacyl-ACP as the acyl donor. Is involved in the biosynthesis of lipid A, a phosphorylated glycolipid that anchors the lipopolysaccharide to the outer membrane of the cell. This chain is UDP-3-O-acylglucosamine N-acyltransferase, found in Leptospira biflexa serovar Patoc (strain Patoc 1 / Ames).